Reading from the N-terminus, the 361-residue chain is MSKRAFNFCAGPAALPDAVLQRAQAELLDWRGKGLSVMEMSHRSDDYVAIASKAEQDLRDLLDIPSDYKVLFLQGGASQQFAEIPLNLLPEDGVADYIDTGIWSKKAIEEARRYGTVNVAASAKEYDYFAIPGQNEWTLTKDAAYVHYASNETIGGLEFDWIPETGDVPLVTDMSSDILSRPLDVSRFGLIYAGAQKNIGPSGLVVVIVREDLLGRARSVCPTMLNYKIAADNGSMYNTPATYSWYLSGLVFEWLKEQGGVTAMEQRNRAKKDLLYKTIDASDFYTNPIQPSARSWMNVPFRLADERLDKPFLEGAEARGLLNLKGHRSVGGMRASIYNALGLDAVEALVAYMAEFEKEHG.

Arg-43 serves as a coordination point for L-glutamate. Pyridoxal 5'-phosphate is bound by residues 77-78, Trp-103, Thr-153, Asp-173, and Gln-196; that span reads AS. Lys-197 carries the post-translational modification N6-(pyridoxal phosphate)lysine. 238-239 provides a ligand contact to pyridoxal 5'-phosphate; it reads NT.

This sequence belongs to the class-V pyridoxal-phosphate-dependent aminotransferase family. SerC subfamily. In terms of assembly, homodimer. The cofactor is pyridoxal 5'-phosphate.

The protein localises to the cytoplasm. The catalysed reaction is O-phospho-L-serine + 2-oxoglutarate = 3-phosphooxypyruvate + L-glutamate. It catalyses the reaction 4-(phosphooxy)-L-threonine + 2-oxoglutarate = (R)-3-hydroxy-2-oxo-4-phosphooxybutanoate + L-glutamate. It participates in amino-acid biosynthesis; L-serine biosynthesis; L-serine from 3-phospho-D-glycerate: step 2/3. Its pathway is cofactor biosynthesis; pyridoxine 5'-phosphate biosynthesis; pyridoxine 5'-phosphate from D-erythrose 4-phosphate: step 3/5. In terms of biological role, catalyzes the reversible conversion of 3-phosphohydroxypyruvate to phosphoserine and of 3-hydroxy-2-oxo-4-phosphonooxybutanoate to phosphohydroxythreonine. In Pseudomonas aeruginosa (strain LESB58), this protein is Phosphoserine aminotransferase.